The chain runs to 679 residues: Dihydroxyacetone phosphate acyltransferase (679 aa).

Ser11 carries the phosphoserine modification. Positions 161-166 (HRSYID) match the HXXXXD motif motif. Residue Lys642 is modified to N6-acetyllysine.

It belongs to the GPAT/DAPAT family. Part of a heterotrimeric complex composed of GNPAT, AGPS and a modified form of GNPAT.

It is found in the peroxisome membrane. The catalysed reaction is dihydroxyacetone phosphate + an acyl-CoA = a 1-acylglycerone 3-phosphate + CoA. The enzyme catalyses dihydroxyacetone phosphate + hexadecanoyl-CoA = 1-hexadecanoylglycerone 3-phosphate + CoA. The protein operates within membrane lipid metabolism; glycerophospholipid metabolism. Functionally, dihydroxyacetonephosphate acyltransferase catalyzing the first step in the biosynthesis of plasmalogens, a subset of phospholipids that differ from other glycerolipids by having an alkyl chain attached through a vinyl ether linkage at the sn-1 position of the glycerol backbone, and which unique physical properties have an impact on various aspects of cell signaling and membrane biology. The chain is Dihydroxyacetone phosphate acyltransferase from Oryctolagus cuniculus (Rabbit).